Reading from the N-terminus, the 118-residue chain is UPF0102 protein ROP_66030 (118 aa).

Belongs to the UPF0102 family.

The protein is UPF0102 protein ROP_66030 of Rhodococcus opacus (strain B4).